A 357-amino-acid polypeptide reads, in one-letter code: MKKYLLLALLPFLYACSNSPNQGINYDEAFAKDTQGLDILTGQFSHNIDRIWGVNELLVASRKDYVKYTDSFYTRSHVSFDEGNIVIETQQDPNRLHNAIVHTLLMGADAKGIDLFASGDVPISSRPFLLGQVVDHQGQQIANQVIASNFATYLIQNKLQTRRLQNGHTVQFVSVPMIANHVEVRARKYLPLIRKAAQRYGIDESLILGIMQTESSFNPYAISYANAIGLMQVVPHTAGRDVFTMKGKGGQPSTRYLYDPTNNIDAGVSYLWILQNQYLDGITNPTSKRFAMISAYNSGAGAVLRVFDNDKDMAIYKINQMYPEQVYRILTTAHPSSQARNYLLKVDKAQKKFRVRR.

The N-terminal stretch at 1-15 is a signal peptide; that stretch reads MKKYLLLALLPFLYA. The N-palmitoyl cysteine moiety is linked to residue C16. A lipid anchor (S-diacylglycerol cysteine) is attached at C16.

Belongs to the transglycosylase Slt family.

Its subcellular location is the cell outer membrane. The enzyme catalyses Exolytic cleavage of the (1-&gt;4)-beta-glycosidic linkage between N-acetylmuramic acid (MurNAc) and N-acetylglucosamine (GlcNAc) residues in peptidoglycan, from either the reducing or the non-reducing ends of the peptidoglycan chains, with concomitant formation of a 1,6-anhydrobond in the MurNAc residue.. Its function is as follows. Murein-degrading enzyme. May play a role in recycling of muropeptides during cell elongation and/or cell division. The protein is Membrane-bound lytic murein transglycosylase C of Haemophilus influenzae (strain PittEE).